The chain runs to 323 residues: Beta-ketoacyl-[acyl-carrier-protein] synthase III (323 aa).

Catalysis depends on residues C112 and H250. Residues 251–255 form an ACP-binding region; sequence QANQR. N280 is a catalytic residue.

This sequence belongs to the thiolase-like superfamily. FabH family. Homodimer.

The protein localises to the cytoplasm. The catalysed reaction is malonyl-[ACP] + acetyl-CoA + H(+) = 3-oxobutanoyl-[ACP] + CO2 + CoA. It participates in lipid metabolism; fatty acid biosynthesis. Catalyzes the condensation reaction of fatty acid synthesis by the addition to an acyl acceptor of two carbons from malonyl-ACP. Catalyzes the first condensation reaction which initiates fatty acid synthesis and may therefore play a role in governing the total rate of fatty acid production. Possesses both acetoacetyl-ACP synthase and acetyl transacylase activities. Its substrate specificity determines the biosynthesis of branched-chain and/or straight-chain of fatty acids. This Oenococcus oeni (strain ATCC BAA-331 / PSU-1) protein is Beta-ketoacyl-[acyl-carrier-protein] synthase III.